The sequence spans 249 residues: Mediator of RNA polymerase II transcription subunit 8 (249 aa).

Residues 154–200 are a coiled coil; the sequence is LEEREMGIQNVVTGLRRQLEDEDEEASESEEEVEEEEMEVVGVRRRS. Residues 170–249 are disordered; it reads RQLEDEDEEA…MTTGIPPTQR (80 aa). Residues 173 to 192 show a composition bias toward acidic residues; sequence EDEDEEASESEEEVEEEEME. Over residues 211–232 the composition is skewed to low complexity; that stretch reads AAPAPGSRQQQQQQKAAGPAVP.

Belongs to the Mediator complex subunit 8 family. As to quaternary structure, component of the Mediator complex.

Its subcellular location is the nucleus. Component of the Mediator complex, a coactivator involved in the regulated transcription of nearly all RNA polymerase II-dependent genes. Mediator functions as a bridge to convey information from gene-specific regulatory proteins to the basal RNA polymerase II transcription machinery. Mediator is recruited to promoters by direct interactions with regulatory proteins and serves as a scaffold for the assembly of a functional preinitiation complex with RNA polymerase II and the general transcription factors. The sequence is that of Mediator of RNA polymerase II transcription subunit 8 (med8) from Aspergillus fumigatus (strain ATCC MYA-4609 / CBS 101355 / FGSC A1100 / Af293) (Neosartorya fumigata).